Here is a 1477-residue protein sequence, read N- to C-terminus: Ring canal kelch protein (1477 aa).

Disordered regions lie at residues 19–62 (LSNG…PGLG), 76–96 (LLQQQQQQHHHHQNPAAEGSG), and 108–137 (SQNSLDESSQKHVQRPNGKERGTVGQYSNE). Residues 20–46 (SNGNSNNNNQQQQQQQQGQNPQQPAQN) are compositionally biased toward low complexity. A phosphoserine mark is found at Ser-108 and Ser-111. The region spanning 157–223 (CDVILVADDV…VYTATVEVNE (67 aa)) is the BTB domain. Kelch repeat units lie at residues 404-449 (ILLV…VLGD), 450-496 (KVYA…VLNG), 498-543 (IYAV…VVHG), 545-592 (LYAV…VLNN), 594-639 (LYAV…AHDG), and 641-687 (LYVV…MIDK). Position 690 (Sec-690) is a non-standard amino acid, selenocysteine. Disordered regions lie at residues 744–841 (PAAP…PQRI), 1119–1200 (HSAA…GNGT), 1291–1326 (RDANASARPLHSTLSRLRNGEKRNPNRVAGNYQYED), 1359–1416 (PLLQ…FKPK), and 1446–1477 (PVSLSDNETETTSSQNNLPSTTNSNNLNEHND). Composition is skewed to low complexity over residues 763-813 (APIG…ANNN) and 820-839 (AAPAPSQQQQQQQAQPQQPQ). Over residues 1125–1137 (IPSSSNINANRTT) the composition is skewed to polar residues. Over residues 1166-1192 (KTTSTGSGKSVTLAKKTSTAAARSSSS) the composition is skewed to low complexity. Composition is skewed to low complexity over residues 1374–1391 (QQRRLQRQGAQAQQQSQQ) and 1456–1477 (TTSSQNNLPSTTNSNNLNEHND).

As to expression, both proteins are expressed in ovaries, male testis, ovariectomized females, cuticle, salivary gland and imaginal disks. Kelch short protein is the predominant form and is also expressed in fat bodies. On entry into metamorphosis levels of full-length protein increase in testis and imaginal disks.

It localises to the cytoplasm. It is found in the cytoskeleton. Its function is as follows. Component of ring canals that regulates the flow of cytoplasm between cells. May be involved in the regulation of cytoplasm flow from nurse cells to the oocyte during oogenesis. Binds actin. In Drosophila melanogaster (Fruit fly), this protein is Ring canal kelch protein (kel).